Reading from the N-terminus, the 302-residue chain is MNETIPGSIDIETLIPDLMIIIFGLVGLTGNAIVFWLLGFRMHRTAFLVYILNLALADFLFLLCHIINSTVDLLKFTLPKGIFAFCFHTIKRVLYITGLSMLSAISTERCLSVLCPIWYHCRRPEHTSTVMCAVIWVLSLLICILDGYFCGYLDNHYFNYSVCQAWDIFIGAYLMFLFVVLCLSTLALLARLFCGARNMKFTRLFVTIMLTVLVFLLCGLPWGITWFLLFWIAPGVFVLDYSPLLVLTAINSCANPIIYFFVGSFRQRLNKQTLKMVLQKALQDTPETPENMVEMSRNKAEP.

Over 1 to 17 (MNETIPGSIDIETLIPD) the chain is Extracellular. Asn-2 carries N-linked (GlcNAc...) asparagine glycosylation. Residues 18-38 (LMIIIFGLVGLTGNAIVFWLL) traverse the membrane as a helical segment. Over 39 to 46 (GFRMHRTA) the chain is Cytoplasmic. The helical transmembrane segment at 47 to 67 (FLVYILNLALADFLFLLCHII) threads the bilayer. N-linked (GlcNAc...) asparagine glycosylation occurs at Asn-68. Over 68-81 (NSTVDLLKFTLPKG) the chain is Extracellular. The chain crosses the membrane as a helical span at residues 82 to 102 (IFAFCFHTIKRVLYITGLSML). Residues 103–129 (SAISTERCLSVLCPIWYHCRRPEHTST) are Cytoplasmic-facing. The chain crosses the membrane as a helical span at residues 130-150 (VMCAVIWVLSLLICILDGYFC). The Extracellular portion of the chain corresponds to 151–167 (GYLDNHYFNYSVCQAWD). N-linked (GlcNAc...) asparagine glycosylation occurs at Asn-159. Residues 168–188 (IFIGAYLMFLFVVLCLSTLAL) form a helical membrane-spanning segment. At 189-211 (LARLFCGARNMKFTRLFVTIMLT) the chain is on the cytoplasmic side. The chain crosses the membrane as a helical span at residues 212–232 (VLVFLLCGLPWGITWFLLFWI). At 233–242 (APGVFVLDYS) the chain is on the extracellular side. The helical transmembrane segment at 243–263 (PLLVLTAINSCANPIIYFFVG) threads the bilayer. Residues 264 to 302 (SFRQRLNKQTLKMVLQKALQDTPETPENMVEMSRNKAEP) are Cytoplasmic-facing.

It belongs to the G-protein coupled receptor 1 family. Mas subfamily. In terms of tissue distribution, expressed exclusively in dorsal root ganglia and nodose ganglia. Expressed in a subset of sensory neurons that includes nociceptors. Expressed in the subclass of non-peptidergic sensory neurons that are IB4(+) and VR1(-).

It is found in the cell membrane. Orphan receptor. May be a receptor for RFamide-family neuropeptides such as NPFF and NPAF, which are analgesic in vivo. May regulate nociceptor function and/or development, including the sensation or modulation of pain. Activated by the antimalarial drug chloroquine. Mediates chloroquine-induced itch, in a histamine-independent manner. The chain is Mas-related G-protein coupled receptor member A3 (Mrgpra3) from Mus musculus (Mouse).